The primary structure comprises 1273 residues: DNA-directed RNA polymerase subunit beta (1273 aa).

The interval 1252-1273 is disordered; it reads ADDQDLVVSSNDEEVSENDERS.

It belongs to the RNA polymerase beta chain family. The RNAP catalytic core consists of 2 alpha, 1 beta, 1 beta' and 1 omega subunit. When a sigma factor is associated with the core the holoenzyme is formed, which can initiate transcription.

The catalysed reaction is RNA(n) + a ribonucleoside 5'-triphosphate = RNA(n+1) + diphosphate. Its function is as follows. DNA-dependent RNA polymerase catalyzes the transcription of DNA into RNA using the four ribonucleoside triphosphates as substrates. This is DNA-directed RNA polymerase subunit beta from Dehalococcoides mccartyi (strain CBDB1).